The primary structure comprises 273 residues: NLP effector protein 10 (273 aa).

Residues 1–21 form the signal peptide; that stretch reads MKLPTFLIGFVALLVTSNGSA. Asparagine 91 is a glycosylation site (N-linked (GlcNAc...) asparagine). The Conserved undecapeptide motif motif lies at 129 to 139; it reads AIMYAWYLPRA. The short motif at 149–155 is the Conserved heptapeptide motif element; that stretch reads GHRHYWL.

It belongs to the Necrosis inducing protein (NPP1) family.

It is found in the secreted. Its function is as follows. Secreted effector that acts as a pathogen-associated molecular pattern (PAMP) recognized by the plant immune system. Seems not to induce necrosis in Nicotiana benthamiana leaves but significantly improves disease resistance of Arabidopsis thaliana to Hyaloperonospora arabidopsidis and causes an inhibition of plant growth which is typically associated with enhanced immunity when over-expressed in Arabidopsis. The protein is NLP effector protein 10 of Plasmopara viticola (Downy mildew of grapevine).